Reading from the N-terminus, the 150-residue chain is 3-dehydroquinate dehydratase (150 aa).

Tyr26 serves as the catalytic Proton acceptor. Asn77, His83, and Asp90 together coordinate substrate. Residue His103 is the Proton donor of the active site. Residues 104–105 and Arg114 contribute to the substrate site; that span reads LS.

Belongs to the type-II 3-dehydroquinase family. As to quaternary structure, homododecamer.

It catalyses the reaction 3-dehydroquinate = 3-dehydroshikimate + H2O. It functions in the pathway metabolic intermediate biosynthesis; chorismate biosynthesis; chorismate from D-erythrose 4-phosphate and phosphoenolpyruvate: step 3/7. Its function is as follows. Catalyzes a trans-dehydration via an enolate intermediate. This chain is 3-dehydroquinate dehydratase, found in Citrobacter koseri (strain ATCC BAA-895 / CDC 4225-83 / SGSC4696).